The primary structure comprises 474 residues: Cell division protein FtsP (474 aa).

Residues 1–27 (MSLSRRQFIQAAGLALGAGSLPLRAQA) constitute a signal peptide (tat-type signal). One can recognise a Plastocyanin-like domain in the interval 229 to 288 (WVRLRLLNASNARRYTLQLSDGRPLYVVASDQGFLPAPVAVQQLSLAPGERREVVIDMSQ).

Belongs to the FtsP family. In terms of processing, predicted to be exported by the Tat system. The position of the signal peptide cleavage has not been experimentally proven.

Its subcellular location is the periplasm. In terms of biological role, cell division protein that is required for growth during stress conditions. May be involved in protecting or stabilizing the divisomal assembly under conditions of stress. This chain is Cell division protein FtsP, found in Yersinia pestis.